The following is a 97-amino-acid chain: U6-theraphotoxin-Hhn1a 2 (97 aa).

A signal peptide spans Met-1–Ala-33. A propeptide spanning residues Ser-34–Arg-61 is cleaved from the precursor. 3 disulfides stabilise this stretch: Cys-63-Cys-77, Cys-70-Cys-82, and Cys-76-Cys-89.

The protein belongs to the neurotoxin 10 (Hwtx-1) family. 12 (Hntx-12) subfamily. In terms of tissue distribution, expressed by the venom gland.

It is found in the secreted. Its function is as follows. Ion channel inhibitor. In Cyriopagopus hainanus (Chinese bird spider), this protein is U6-theraphotoxin-Hhn1a 2.